The following is a 296-amino-acid chain: Formamidopyrimidine-DNA glycosylase (296 aa).

P2 acts as the Schiff-base intermediate with DNA in catalysis. E3 functions as the Proton donor in the catalytic mechanism. Catalysis depends on K58, which acts as the Proton donor; for beta-elimination activity. DNA contacts are provided by H104, R126, and K169. The FPG-type zinc-finger motif lies at 260 to 296 (SVYDREGQACGTPGCGGTVARIVQAGRSTFYCAACQK). R286 functions as the Proton donor; for delta-elimination activity in the catalytic mechanism.

This sequence belongs to the FPG family. Monomer. It depends on Zn(2+) as a cofactor.

The catalysed reaction is Hydrolysis of DNA containing ring-opened 7-methylguanine residues, releasing 2,6-diamino-4-hydroxy-5-(N-methyl)formamidopyrimidine.. It carries out the reaction 2'-deoxyribonucleotide-(2'-deoxyribose 5'-phosphate)-2'-deoxyribonucleotide-DNA = a 3'-end 2'-deoxyribonucleotide-(2,3-dehydro-2,3-deoxyribose 5'-phosphate)-DNA + a 5'-end 5'-phospho-2'-deoxyribonucleoside-DNA + H(+). Functionally, involved in base excision repair of DNA damaged by oxidation or by mutagenic agents. Acts as a DNA glycosylase that recognizes and removes damaged bases. Has a preference for oxidized purines, such as 7,8-dihydro-8-oxoguanine (8-oxoG). Has AP (apurinic/apyrimidinic) lyase activity and introduces nicks in the DNA strand. Cleaves the DNA backbone by beta-delta elimination to generate a single-strand break at the site of the removed base with both 3'- and 5'-phosphates. The polypeptide is Formamidopyrimidine-DNA glycosylase (Rhizobium etli (strain CIAT 652)).